We begin with the raw amino-acid sequence, 143 residues long: Transcription antitermination protein NusB (143 aa).

This sequence belongs to the NusB family.

Involved in transcription antitermination. Required for transcription of ribosomal RNA (rRNA) genes. Binds specifically to the boxA antiterminator sequence of the ribosomal RNA (rrn) operons. The polypeptide is Transcription antitermination protein NusB (Clostridium botulinum (strain ATCC 19397 / Type A)).